Here is a 162-residue protein sequence, read N- to C-terminus: MRSRLWLGLAWLLLARAPGAPGGYPHLEGDVRWRRLFSSTHFFLRVDLGGRVQGTRWRHGQDSIVEIRSVRVGTVVIKAVYSGFYVAMNRRGRLYGSRVYSVDCRFRERIEENGYNTYASRRWRHRGRPMFLALDSQGIPRQGRRTRRHQLSTHFLPVLVSS.

The N-terminal stretch at 1–22 is a signal peptide; that stretch reads MRSRLWLGLAWLLLARAPGAPG.

Belongs to the heparin-binding growth factors family. As to quaternary structure, interacts with FGFR1 and FGFR2. Interacts with FGFBP1. In terms of tissue distribution, preferentially expressed in skin; low expression in brain. Expressed in the inner root sheath of the hair follicle.

It localises to the secreted. Functionally, plays a role in the fasting response, glucose homeostasis, lipolysis and lipogenesis. Can stimulate cell proliferation (in vitro). May be involved in hair development. This Mus musculus (Mouse) protein is Fibroblast growth factor 22 (Fgf22).